Reading from the N-terminus, the 709-residue chain is DNA ligase (709 aa).

NAD(+) is bound by residues Asp34 to Asp38, Ser83 to Leu84, and Glu115. Lys117 (N6-AMP-lysine intermediate) is an active-site residue. NAD(+) is bound by residues Arg138, Glu185, Lys301, and Lys325. Residues Cys419, Cys422, Cys437, and Cys443 each coordinate Zn(2+). Residues Arg602 to Pro691 form the BRCT domain. The tract at residues Gly679–Glu709 is disordered. Over residues Glu683 to Glu694 the composition is skewed to pro residues.

This sequence belongs to the NAD-dependent DNA ligase family. LigA subfamily. It depends on Mg(2+) as a cofactor. Requires Mn(2+) as cofactor.

The enzyme catalyses NAD(+) + (deoxyribonucleotide)n-3'-hydroxyl + 5'-phospho-(deoxyribonucleotide)m = (deoxyribonucleotide)n+m + AMP + beta-nicotinamide D-nucleotide.. Its function is as follows. DNA ligase that catalyzes the formation of phosphodiester linkages between 5'-phosphoryl and 3'-hydroxyl groups in double-stranded DNA using NAD as a coenzyme and as the energy source for the reaction. It is essential for DNA replication and repair of damaged DNA. The polypeptide is DNA ligase (Chloroflexus aurantiacus (strain ATCC 29364 / DSM 637 / Y-400-fl)).